The primary structure comprises 378 residues: MVKSPGTEDYTRRSLLANGLGLTPPMGWNSWNHFRCNLDEKLIRETADAMVSKGLAALGYKYINLDDCWAELNRDSQGNLVPKGSTFPSGIKALADYVHSKGLKLGIYSDAGTQTCSKTMPGSLGHEEQDAKTFASWGVDYLKYDNCNNNNISPKERYPIMSKALLNSGRSIFFSLCEWGEEDPATWAKEVGNSWRTTGDIDDSWSSMTSRADMNDKWASYAGPGGWNDPDMLEVGNGGMTTTEYRSHFSIWALAKAPLLIGCDIRSMDGATFQLLSNAEVIAVNQDKLGVQGNKVKTYGDLEVWAGPLSGKRVAVALWNRGSSTATITAYWSDVGLPSTAVVNARDLWAHSTEKSVKGQISAAVDAHDSKMYVLTPQ.

The N-terminal stretch at 1-15 (MVKSPGTEDYTRRSL) is a signal peptide. Cystine bridges form between C36-C68 and C116-C147. The active-site Nucleophile is the D145. A substrate-binding site is contributed by 178–182 (EWGEE). D200 (proton donor) is an active-site residue.

The protein belongs to the glycosyl hydrolase 27 family.

It carries out the reaction Hydrolysis of terminal, non-reducing alpha-D-galactose residues in alpha-D-galactosides, including galactose oligosaccharides, galactomannans and galactolipids.. Preferentially cleaves alpha-1,3 and alpha-1,4 glycoside linkages. Involved in the hydrolysis of the galactomannan, it splits alpha-linked galactose moieties. It is particularly suitable for the hydrolysis of guar gum to a gum with improved gelling properties. Can cleave terminal alpha-1,3-linked galactose residues responsible for blood group B specificity from the surface of erythrocytes thereby converting these cells serologically to group O. This is Alpha-galactosidase from Coffea arabica (Arabian coffee).